A 164-amino-acid chain; its full sequence is Putative histone H2B type 2-D (164 aa).

Positions 1 to 12 are enriched in low complexity; it reads MPEPAKFAPAPK. Positions 1-33 are disordered; it reads MPEPAKFAPAPKKGSKKAVTKAQKKDGKKRKRS. Proline 2 carries the N-acetylproline modification. Lysine 6 carries the post-translational modification N6-(2-hydroxyisobutyryl)lysine; alternate. Lysine 6 and lysine 12 each carry N6-(beta-hydroxybutyryl)lysine; alternate. N6-acetyllysine; alternate occurs at positions 6, 12, and 13. Lysine 6 is subject to N6-butyryllysine; alternate. Residues lysine 6, lysine 12, and lysine 13 each carry the N6-crotonyllysine; alternate modification. Residues lysine 6 and lysine 12 each carry the N6-lactoyllysine; alternate modification. Residue lysine 6 forms a Glycyl lysine isopeptide (Lys-Gly) (interchain with G-Cter in SUMO2); alternate linkage. Lysine 13 is subject to N6-(2-hydroxyisobutyryl)lysine; alternate. Serine 15 carries the phosphoserine; by STK4/MST1 modification. 4 positions are modified to N6-acetyllysine; alternate: lysine 16, lysine 17, lysine 21, and lysine 24. Lysine 16, lysine 17, lysine 21, and lysine 24 each carry N6-crotonyllysine; alternate. An N6-lactoyllysine; alternate mark is found at lysine 16, lysine 17, lysine 21, and lysine 24. An N6-(beta-hydroxybutyryl)lysine; alternate mark is found at lysine 17 and lysine 21. An N6-glutaryllysine; alternate modification is found at lysine 17. An N6-(2-hydroxyisobutyryl)lysine; alternate mark is found at lysine 21 and lysine 24. Lysine 21 is modified (N6-butyryllysine; alternate). Lysine 21 is covalently cross-linked (Glycyl lysine isopeptide (Lys-Gly) (interchain with G-Cter in SUMO2); alternate). The residue at position 25 (lysine 25) is an N6-(2-hydroxyisobutyryl)lysine. Lysine 35 is subject to N6-(2-hydroxyisobutyryl)lysine; alternate. An N6-(beta-hydroxybutyryl)lysine; alternate modification is found at lysine 35. Lysine 35 carries the post-translational modification N6-crotonyllysine; alternate. At lysine 35 the chain carries N6-glutaryllysine; alternate. At lysine 35 the chain carries N6-succinyllysine; alternate. Lysine 35 participates in a covalent cross-link: Glycyl lysine isopeptide (Lys-Gly) (interchain with G-Cter in ubiquitin); alternate. Serine 37 is modified (phosphoserine; by AMPK). N6-(2-hydroxyisobutyryl)lysine; alternate occurs at positions 44, 47, and 58. N6-lactoyllysine; alternate is present on lysine 44. 2 positions are modified to N6-glutaryllysine; alternate: lysine 44 and lysine 47. At lysine 47 the chain carries N6-methyllysine; alternate. Lysine 58 carries the N6,N6-dimethyllysine; alternate modification. At arginine 80 the chain carries Dimethylated arginine. Lysine 86 is modified (N6-(2-hydroxyisobutyryl)lysine; alternate). Lysine 86 carries the post-translational modification N6-(beta-hydroxybutyryl)lysine; alternate. Residue lysine 86 is modified to N6-acetyllysine; alternate. Position 86 is an N6-lactoyllysine; alternate (lysine 86). Lysine 86 carries the post-translational modification N6,N6,N6-trimethyllysine; alternate. Omega-N-methylarginine occurs at positions 87 and 93. Residues 111–140 are disordered; that stretch reads PCPRAPRRSPSTPAPSESLPGPGARSLPPS.

It belongs to the histone H2B family. As to quaternary structure, the nucleosome is a histone octamer containing two molecules each of H2A, H2B, H3 and H4 assembled in one H3-H4 heterotetramer and two H2A-H2B heterodimers. The octamer wraps approximately 147 bp of DNA. Post-translationally, phosphorylation at Ser-37 (H2BS36ph) by AMPK in response to stress promotes transcription. Phosphorylated on Ser-15 (H2BS14ph) by STK4/MST1 during apoptosis; which facilitates apoptotic chromatin condensation. Also phosphorylated on Ser-15 in response to DNA double strand breaks (DSBs), and in correlation with somatic hypermutation and immunoglobulin class-switch recombination. In terms of processing, crotonylation (Kcr) is specifically present in male germ cells and marks testis-specific genes in post-meiotic cells, including X-linked genes that escape sex chromosome inactivation in haploid cells. Crotonylation marks active promoters and enhancers and confers resistance to transcriptional repressors. It is also associated with post-meiotically activated genes on autosomes. Lactylated in macrophages by EP300/P300 by using lactoyl-CoA directly derived from endogenous or exogenous lactate, leading to stimulates gene transcription.

The protein resides in the nucleus. The protein localises to the chromosome. Functionally, core component of nucleosome. Nucleosomes wrap and compact DNA into chromatin, limiting DNA accessibility to the cellular machineries which require DNA as a template. Histones thereby play a central role in transcription regulation, DNA repair, DNA replication and chromosomal stability. DNA accessibility is regulated via a complex set of post-translational modifications of histones, also called histone code, and nucleosome remodeling. This Homo sapiens (Human) protein is Putative histone H2B type 2-D.